A 190-amino-acid polypeptide reads, in one-letter code: Large ribosomal subunit protein bL25 (190 aa).

The protein belongs to the bacterial ribosomal protein bL25 family. CTC subfamily. In terms of assembly, part of the 50S ribosomal subunit; part of the 5S rRNA/L5/L18/L25 subcomplex. Contacts the 5S rRNA. Binds to the 5S rRNA independently of L5 and L18.

Its function is as follows. This is one of the proteins that binds to the 5S RNA in the ribosome where it forms part of the central protuberance. The polypeptide is Large ribosomal subunit protein bL25 (Neisseria meningitidis serogroup C (strain 053442)).